A 582-amino-acid polypeptide reads, in one-letter code: Solute carrier family 15 member 3 (582 aa).

The disordered stretch occupies residues Met1–Val20. 4 helical membrane-spanning segments follow: residues Thr33–Thr53, Leu77–Tyr97, Leu102–Ile122, and Pro155–Val175. The N-linked (GlcNAc...) asparagine glycan is linked to Asn178. Residues Trp201–Glu221 form a helical membrane-spanning segment. Asn223 is a glycosylation site (N-linked (GlcNAc...) asparagine). Transmembrane regions (helical) follow at residues Ile232–Ile252 and Phe312–Tyr332. Residue Asn357 is glycosylated (N-linked (GlcNAc...) asparagine). The next 2 membrane-spanning stretches (helical) occupy residues Ile371 to Lys391 and Leu409 to Leu429. Asn440 carries an N-linked (GlcNAc...) asparagine glycan. Helical transmembrane passes span Tyr466–Tyr485, Gly498–Leu518, and Leu541–Ala561. Asn575 carries an N-linked (GlcNAc...) asparagine glycan.

This sequence belongs to the major facilitator superfamily. Proton-dependent oligopeptide transporter (POT/PTR) (TC 2.A.17) family. Abundant expression in lung, spleen and thymus, and detected faintly in brain, liver, adrenal gland and heart at protein level.

The protein localises to the lysosome membrane. It is found in the endosome membrane. It catalyses the reaction N-acetyl-D-muramoyl-L-alanyl-D-isoglutamine(out) + n H(+)(out) = N-acetyl-D-muramoyl-L-alanyl-D-isoglutamine(in) + n H(+)(in). The catalysed reaction is glycylglycylglycine(out) + n H(+)(out) = glycylglycylglycine(in) + n H(+)(in). It carries out the reaction carnosine(out) + n H(+)(out) = carnosine(in) + n H(+)(in). The enzyme catalyses L-histidine(out) + n H(+)(out) = L-histidine(in) + n H(+)(in). Its function is as follows. Proton-coupled amino-acid transporter that transports free histidine and certain di- and tripeptides, and is involved in innate immune response. Also able to transport carnosine. Involved in the detection of microbial pathogens by toll-like receptors (TLRs) and NOD-like receptors (NLRs), probably by mediating transport of bacterial peptidoglycans across the endolysosomal membrane: catalyzes the transport of certain bacterial peptidoglycans, such as muramyl dipeptide (MDP), the NOD2 ligand. The chain is Solute carrier family 15 member 3 (Slc15a3) from Rattus norvegicus (Rat).